The primary structure comprises 41 residues: Photosystem II reaction center protein Y (41 aa).

Residues 7–25 (VAIVLAPIAVAAGWAAFNI) traverse the membrane as a helical segment.

It belongs to the PsbY family. PSII is composed of 1 copy each of membrane proteins PsbA, PsbB, PsbC, PsbD, PsbE, PsbF, PsbH, PsbI, PsbJ, PsbK, PsbL, PsbM, PsbT, PsbX, PsbY, PsbZ, Psb30/Ycf12, peripheral proteins PsbO, CyanoQ (PsbQ), PsbU, PsbV and a large number of cofactors. It forms dimeric complexes.

Its subcellular location is the cellular thylakoid membrane. In terms of biological role, loosely associated component of the core of photosystem II (PSII), it is not always seen in crystals. PSII is a light-driven water plastoquinone oxidoreductase, using light energy to abstract electrons from H(2)O, generating a proton gradient subsequently used for ATP formation. The protein is Photosystem II reaction center protein Y of Nostoc sp. (strain PCC 7120 / SAG 25.82 / UTEX 2576).